We begin with the raw amino-acid sequence, 537 residues long: Organic anion transporter 3 (537 aa).

Residues 1–11 lie on the Cytoplasmic side of the membrane; the sequence is MTFSEILDRVG. Ser4 bears the Phosphoserine mark. A helical membrane pass occupies residues 12–32; that stretch reads SMGPFQYLHVTLLALPILGIA. Residues 33-123 lie on the Extracellular side of the membrane; the sequence is NHNLLQIFTA…LVCGSNKLKE (91 aa). Asn81 carries an N-linked (GlcNAc...) asparagine glycan. A helical membrane pass occupies residues 124–144; it reads MAQSVFMAGILVGGPVFGELS. Residues 145-150 are Cytoplasmic-facing; that stretch reads DRFGRK. A helical transmembrane segment spans residues 151 to 171; sequence PILTWSYLLLAASGSSAAFSP. Topologically, residues 172–176 are extracellular; the sequence is SLTVY. Residues 177-197 form a helical membrane-spanning segment; the sequence is MIFRFLCGCSISGISLSTIIL. Over 198–212 the chain is Cytoplasmic; the sequence is NVEWVPTSTRAISST. Residues 213-233 form a helical membrane-spanning segment; sequence TIGYCYTIGQFILPGLAYAVP. Over 234 to 236 the chain is Extracellular; it reads QWR. The helical transmembrane segment at 237–257 threads the bilayer; it reads WLQLSVSAAFFIFSLLSWWVP. At 258 to 327 the chain is on the cytoplasmic side; it reads ESIRWLVLSG…FRVSILRRVT (70 aa). The chain crosses the membrane as a helical span at residues 328–348; that stretch reads FCLSLAWFATGFAYYSLAMGV. At 349-354 the chain is on the extracellular side; it reads EEFGVN. A helical transmembrane segment spans residues 355–375; it reads IYILQIIFGGVDIPAKFITIL. The Cytoplasmic portion of the chain corresponds to 376 to 383; sequence SISYLGRR. Residues 384-404 form a helical membrane-spanning segment; it reads ITQGFLLILAGVAILALIFVS. Topologically, residues 405-411 are extracellular; it reads SEMQLLR. The chain crosses the membrane as a helical span at residues 412–432; that stretch reads TALAVFGKGCLSGSFSCLFLY. Topologically, residues 433 to 471 are cytoplasmic; it reads TSELYPTVLRQTGMGISNIWARVGSMIAPLVKITGELQP. A helical transmembrane segment spans residues 472–492; that stretch reads FIPNVIFGTMTLLGGSAAFFL. Over 493 to 537 the chain is Extracellular; sequence LETLNRPLPETIEDIQDWYQQTKKTKQEPEAEKASQTIPLKTGGP. Positions 513 to 537 are disordered; sequence QTKKTKQEPEAEKASQTIPLKTGGP.

It belongs to the major facilitator (TC 2.A.1) superfamily. Organic cation transporter (TC 2.A.1.19) family. In terms of tissue distribution, expressed mainly in kidney. In kidney, detected in almost all parts of the nephron, including macula densa cells. Expressed (at protein level) throughout the renal cortex. Widely distributed in the brain with no large regional differences. Expressed in the choroid plexus (CP, located in the ventricles of the brain). Expressed in developing bone. Weakly expressed in brain and eye.

It is found in the basolateral cell membrane. It catalyses the reaction estrone 3-sulfate(out) + glutarate(in) = estrone 3-sulfate(in) + glutarate(out). The enzyme catalyses estrone 3-sulfate(in) + 2-oxoglutarate(out) = estrone 3-sulfate(out) + 2-oxoglutarate(in). It carries out the reaction taurocholate(out) + glutarate(in) = taurocholate(in) + glutarate(out). The catalysed reaction is dehydroepiandrosterone 3-sulfate(out) + glutarate(in) = dehydroepiandrosterone 3-sulfate(in) + glutarate(out). It catalyses the reaction glutarate(in) + 2-oxoglutarate(out) = glutarate(out) + 2-oxoglutarate(in). The enzyme catalyses urate(in) + 2-oxoglutarate(out) = urate(out) + 2-oxoglutarate(in). It carries out the reaction prostaglandin F2alpha(out) + glutarate(in) = prostaglandin F2alpha(in) + glutarate(out). The catalysed reaction is prostaglandin F2alpha(out) + 2-oxoglutarate(in) = prostaglandin F2alpha(in) + 2-oxoglutarate(out). It catalyses the reaction (R)-carnitine(out) + 2-oxoglutarate(in) = (R)-carnitine(in) + 2-oxoglutarate(out). The enzyme catalyses glutarate(in) + (R)-carnitine(out) = glutarate(out) + (R)-carnitine(in). It carries out the reaction prostaglandin E2(out) + 2-oxoglutarate(in) = prostaglandin E2(in) + 2-oxoglutarate(out). The catalysed reaction is prostaglandin E2(out) + glutarate(in) = prostaglandin E2(in) + glutarate(out). It catalyses the reaction urate(in) + glutarate(out) = urate(out) + glutarate(in). The enzyme catalyses taurocholate(out) + 2-oxoglutarate(in) = taurocholate(in) + 2-oxoglutarate(out). It carries out the reaction dehydroepiandrosterone 3-sulfate(out) + 2-oxoglutarate(in) = dehydroepiandrosterone 3-sulfate(in) + 2-oxoglutarate(out). The catalysed reaction is kynurenate(out) + a dicarboxylate(in) = kynurenate(in) + a dicarboxylate(out). It catalyses the reaction (indol-3-yl)acetate(out) + a dicarboxylate(in) = (indol-3-yl)acetate(in) + a dicarboxylate(out). The enzyme catalyses indoxyl sulfate(out) + a dicarboxylate(in) = indoxyl sulfate(in) + a dicarboxylate(out). It carries out the reaction N-benzoylglycine(out) + a dicarboxylate(in) = N-benzoylglycine(in) + a dicarboxylate(out). The catalysed reaction is 3-carboxy-4-methyl-5-propyl-2-furanpropanoate(out) + a dicarboxylate(in) = 3-carboxy-4-methyl-5-propyl-2-furanpropanoate(in) + a dicarboxylate(out). It catalyses the reaction (6R)-L-erythro-5,6,7,8-tetrahydrobiopterin(out) + a dicarboxylate(in) = (6R)-L-erythro-5,6,7,8-tetrahydrobiopterin(in) + a dicarboxylate(out). The enzyme catalyses L-erythro-7,8-dihydrobiopterin(out) + a dicarboxylate(in) = L-erythro-7,8-dihydrobiopterin(in) + a dicarboxylate(out). It carries out the reaction L-sepiapterin(out) + a dicarboxylate(in) = L-sepiapterin(in) + a dicarboxylate(out). With respect to regulation, expression inhibited by androgens such as testosterone. In terms of biological role, functions as an organic anion/dicarboxylate exchanger that couples organic anion uptake indirectly to the sodium gradient. Transports organic anions such as estrone 3-sulfate (E1S) and urate in exchange for dicarboxylates such as glutarate or ketoglutarate (2-oxoglutarate). Plays an important role in the excretion of endogenous and exogenous organic anions, especially from the kidney and the brain. E1S transport is pH- and chloride-dependent and may also involve E1S/cGMP exchange. Responsible for the transport of prostaglandin E2 (PGE2) and prostaglandin F2(alpha) (PGF2(alpha)) in the basolateral side of the renal tubule. Involved in the transport of neuroactive tryptophan metabolites kynurenate and xanthurenate. Functions as a biopterin transporters involved in the uptake and the secretion of coenzymes tetrahydrobiopterin (BH4), dihydrobiopterin (BH2) and sepiapterin to urine, thereby determining baseline levels of blood biopterins. May be involved in the basolateral transport of steviol, a metabolite of the popular sugar substitute stevioside. May participate in the detoxification/ renal excretion of drugs and xenobiotics, such as the histamine H(2)-receptor antagonists fexofenadine and cimetidine, the antibiotic benzylpenicillin (PCG), the anionic herbicide 2,4-dichloro-phenoxyacetate (2,4-D), the diagnostic agent p-aminohippurate (PAH), the antiviral acyclovir (ACV), and the mycotoxin ochratoxin (OTA), by transporting these exogenous organic anions across the cell membrane in exchange for dicarboxylates such as 2-oxoglutarate. May contribute to the release of cortisol in the adrenals. Involved in one of the detoxification systems on the choroid plexus (CP), removes substrates such as E1S or taurocholate (TC), PCG, 2,4-D and PAH, from the cerebrospinal fluid (CSF) to the blood for eventual excretion in urine and bile. Also contributes to the uptake of several other organic compounds such as the prostanoids prostaglandin E(2) and prostaglandin F(2-alpha), L-carnitine, and the therapeutic drugs allopurinol, 6-mercaptopurine (6-MP) and 5-fluorouracil (5-FU). Mediates the transport of PAH, PCG, and the statins pravastatin and pitavastatin, from the cerebrum into the blood circulation across the blood-brain barrier (BBB). Contributes to the renal uptake of potent uremic toxins (indoxyl sulfate (IS), indole acetate (IA), hippurate/N-benzoylglycine (HA) and 3-carboxy-4-methyl-5-propyl-2-furanpropionate (CMPF)), pravastatin, PCG, E1S and dehydroepiandrosterone sulfate (DHEAS), and is partly involved in the renal uptake of temocaprilat (an angiotensin-converting enzyme (ACE) inhibitor). In summary, plays a role in the efflux of drugs and xenobiotics, helping reduce their undesired toxicological effects on the body. The polypeptide is Organic anion transporter 3 (Slc22a8) (Mus musculus (Mouse)).